Consider the following 149-residue polypeptide: Small ribosomal subunit protein eS19 (149 aa).

The protein belongs to the eukaryotic ribosomal protein eS19 family.

The protein is Small ribosomal subunit protein eS19 (RPS19) of Mya arenaria (Soft-shell clam).